Consider the following 203-residue polypeptide: B-cell CLL/lymphoma 7 protein family member B-A (203 aa).

2 disordered regions span residues 55-80 and 94-148; these read KEKE…ESSD and SNQS…EIME. Over residues 109 to 129 the composition is skewed to low complexity; that stretch reads ADSSNNSSPPASEPVSPAPQS.

Belongs to the BCL7 family.

The polypeptide is B-cell CLL/lymphoma 7 protein family member B-A (bcl7ba) (Danio rerio (Zebrafish)).